The following is a 500-amino-acid chain: Glycerol kinase (500 aa).

Threonine 12 provides a ligand contact to ADP. Threonine 12, threonine 13, and serine 14 together coordinate ATP. Threonine 12 is a binding site for sn-glycerol 3-phosphate. Residue arginine 16 coordinates ADP. Positions 82, 83, 134, and 244 each coordinate sn-glycerol 3-phosphate. Glycerol is bound by residues arginine 82, glutamate 83, tyrosine 134, aspartate 244, and glutamine 245. ADP-binding residues include threonine 266 and glycine 309. Positions 266, 309, 313, and 410 each coordinate ATP. The ADP site is built by glycine 410 and asparagine 414.

This sequence belongs to the FGGY kinase family. In terms of assembly, homotetramer and homodimer (in equilibrium).

It carries out the reaction glycerol + ATP = sn-glycerol 3-phosphate + ADP + H(+). Its pathway is polyol metabolism; glycerol degradation via glycerol kinase pathway; sn-glycerol 3-phosphate from glycerol: step 1/1. Its activity is regulated as follows. Activated by phosphorylation and inhibited by fructose 1,6-bisphosphate (FBP). Its function is as follows. Key enzyme in the regulation of glycerol uptake and metabolism. Catalyzes the phosphorylation of glycerol to yield sn-glycerol 3-phosphate. This Alkaliphilus metalliredigens (strain QYMF) protein is Glycerol kinase.